The primary structure comprises 451 residues: uncharacterized protein (451 aa).

Transmembrane regions (helical) follow at residues 13 to 33, 41 to 61, 97 to 117, 142 to 162, 174 to 194, 217 to 237, 255 to 275, 299 to 319, 345 to 365, 381 to 401, and 429 to 449; these read IGFV…WKFP, GGAF…PLLV, ACFL…LYIV, NPVQ…LVVA, AVMM…SLTL, ILFA…VMVT, IVLM…PAVF, LPFG…AALT, WTSG…YGVL, FTVS…FIPL, and LLRF…IGIL.

It belongs to the sodium:neurotransmitter symporter (SNF) (TC 2.A.22) family.

It localises to the cell membrane. In terms of biological role, putative sodium-dependent transporter. This is an uncharacterized protein from Bacillus subtilis (strain 168).